We begin with the raw amino-acid sequence, 1410 residues long: non-specific serine/threonine protein kinase (1410 aa).

Positions 27-299 (THYVSQLNNS…LLEKYRTIYF (273 aa)) constitute a Protein kinase domain. ATP-binding positions include 33–41 (LNNSRFLKT) and Lys54. Catalysis depends on Asp147, which acts as the Proton acceptor. HEAT repeat units lie at residues 441-478 (TKLDRTLPYLVAALEDDSTRVKVMAMNCVTTLIKEVKH), 485-525 (NIFV…KANL), 556-594 (RKLQQLFEDLTVSILTDPEISVKVALLKNILPLCKYFGR), 596-633 (KTNDVILSHLITYLNDRDPALRMYLVECISGIAILLGP), and 635-672 (TMEQYILPLIIQTITDEEELVVVSVLKNLKDLLKTRFV). WD repeat units follow at residues 1037–1076 (FDGTLLQSEVLLGTKSFMIYGSDQGALTVWDIDRLANEKS), 1187–1226 (ADYGCTISMVLDDKNNLLFFGTVSGIIEMWDARYFVQIRA), and 1230–1273 (GESL…CKHV).

This sequence belongs to the protein kinase superfamily. Ser/Thr protein kinase family. Component of the autophagy-specific VPS34 PI3-kinase complex I composed of VPS15, VPS30, VPS34, ATG14 and ATG38; and of the VPS34 PI3-kinase complex II composed of VPS15, VPS30, VPS34 and VPS38. Post-translationally, autophosphorylated.

Its subcellular location is the golgi apparatus. It localises to the trans-Golgi network membrane. The protein localises to the endosome membrane. It catalyses the reaction L-seryl-[protein] + ATP = O-phospho-L-seryl-[protein] + ADP + H(+). The enzyme catalyses L-threonyl-[protein] + ATP = O-phospho-L-threonyl-[protein] + ADP + H(+). Serine/threonine-protein kinase that plays a role in signaling in modulation of host immune response, intracellular survival and virulence. Required for impediment of phagosomal maturation in THP-1 macrophages. Regulatory subunit of the autophagy-specific VPS34 PI3-kinase complex I essential to recruit the ATG8-phosphatidylinositol conjugate and the ATG12-ATG5 conjugate to the pre-autophagosomal structure. Within the PS34 PI3-kinase complex I, VPS15-mediated phosphorylation of VPS34 may be required for recruiting VPS34 to the membrane but not for activation of its PI3K activity. Is also involved in endosome-to-Golgi retrograde transport as part of the VPS34 PI3-kinase complex II. This second complex is required for the endosome-to-Golgi retrieval of PEP1 and KEX2, and the recruitment of VPS5 and VPS7, two components of the retromer complex, to endosomal membranes (probably through the synthesis of a specific pool of phosphatidylinositol 3-phosphate recruiting the retromer to the endosomes). By regulating VPS34 kinase activity, VPS15 appears to be essential for the efficient delivery of soluble hydrolases to the yeast vacuole. This is non-specific serine/threonine protein kinase from Candida glabrata (strain ATCC 2001 / BCRC 20586 / JCM 3761 / NBRC 0622 / NRRL Y-65 / CBS 138) (Yeast).